A 376-amino-acid polypeptide reads, in one-letter code: Serpin B6 (376 aa).

M1 is subject to N-acetylmethionine. S151 is subject to Phosphoserine. K195 carries the N6-acetyllysine modification.

This sequence belongs to the serpin family. Ov-serpin subfamily. As to quaternary structure, forms a complex with the monomeric form of beta-tryptase.

The protein localises to the cytoplasm. Its function is as follows. Inhibitor of cathepsin G, kallikrein-8 and thrombin. May play an important role in the inner ear in the protection against leakage of lysosomal content during stress. May be involved in the regulation of serine proteinases present in the brain or extravasated from the blood. In Pongo abelii (Sumatran orangutan), this protein is Serpin B6 (SERPINB6).